Reading from the N-terminus, the 373-residue chain is Alanine racemase (373 aa).

Lys-35 acts as the Proton acceptor; specific for D-alanine in catalysis. An N6-(pyridoxal phosphate)lysine modification is found at Lys-35. Arg-130 serves as a coordination point for substrate. Tyr-253 functions as the Proton acceptor; specific for L-alanine in the catalytic mechanism. Met-305 provides a ligand contact to substrate.

This sequence belongs to the alanine racemase family. Pyridoxal 5'-phosphate serves as cofactor.

It carries out the reaction L-alanine = D-alanine. It participates in amino-acid biosynthesis; D-alanine biosynthesis; D-alanine from L-alanine: step 1/1. Its function is as follows. Catalyzes the interconversion of L-alanine and D-alanine. May also act on other amino acids. In Cupriavidus necator (strain ATCC 17699 / DSM 428 / KCTC 22496 / NCIMB 10442 / H16 / Stanier 337) (Ralstonia eutropha), this protein is Alanine racemase (alr).